A 609-amino-acid polypeptide reads, in one-letter code: UvrABC system protein C (609 aa).

The GIY-YIG domain occupies 19-97 (ISPGCYLWKS…IKKHNPRFNV (79 aa)). Residues 208 to 243 (ESLVGDLSIKMSASSNRMDFEKAARYRDMLQRIQNF) form the UVR domain.

Belongs to the UvrC family. As to quaternary structure, interacts with UvrB in an incision complex.

It localises to the cytoplasm. Functionally, the UvrABC repair system catalyzes the recognition and processing of DNA lesions. UvrC both incises the 5' and 3' sides of the lesion. The N-terminal half is responsible for the 3' incision and the C-terminal half is responsible for the 5' incision. The sequence is that of UvrABC system protein C from Leptospira borgpetersenii serovar Hardjo-bovis (strain JB197).